The primary structure comprises 102 residues: Large ribosomal subunit protein bL21 (102 aa).

This sequence belongs to the bacterial ribosomal protein bL21 family. Part of the 50S ribosomal subunit. Contacts protein L20.

Its function is as follows. This protein binds to 23S rRNA in the presence of protein L20. The sequence is that of Large ribosomal subunit protein bL21 from Exiguobacterium sp. (strain ATCC BAA-1283 / AT1b).